A 128-amino-acid chain; its full sequence is UPF0325 protein PMI2289 (128 aa).

Belongs to the UPF0325 family.

The chain is UPF0325 protein PMI2289 from Proteus mirabilis (strain HI4320).